Here is a 47-residue protein sequence, read N- to C-terminus: AGALGESGASLSIVNSLDVLRNRLLLEIARKKAKEGANRNRQILLSL.

This sequence belongs to the sauvagine/corticotropin-releasing factor/urotensin I family.

It is found in the secreted. Functionally, stimulates fluid secretion by the Malpighian tubules. Increases cyclic AMP production in Malpighian tubules. This is Diuretic hormone 2 from Tenebrio molitor (Yellow mealworm beetle).